A 617-amino-acid chain; its full sequence is D-glucuronyl C5-epimerase (617 aa).

The Cytoplasmic segment spans residues 1–11; sequence MRCLAARVNYK. The chain crosses the membrane as a helical; Signal-anchor for type II membrane protein span at residues 12-28; that stretch reads TLIIICALFTLVTVLLW. Residues 29–617 are Lumenal-facing; sequence NKCSSDKAIQ…YLKGSRAKHN (589 aa). Residues Tyr-179, 184–186, Gln-201, Tyr-209, Gln-212, and Gln-215 each bind substrate; that span reads RDR. 5 residues coordinate Ca(2+): Thr-237, Glu-239, Thr-268, Asn-269, and Asp-392. Residues 429 to 432, 499 to 500, Asn-510, Tyr-514, Tyr-560, Arg-563, and 572 to 581 contribute to the substrate site; these read KLGE, EY, and NLARWDYHTT.

The protein belongs to the D-glucuronyl C5-epimerase family. Homodimer. Interacts with HS2ST1.

It localises to the golgi apparatus membrane. The catalysed reaction is [heparosan-N-sulfate](n) = [heparan-N-sulfate](n). It functions in the pathway glycan metabolism; heparan sulfate biosynthesis. It participates in glycan metabolism; heparin biosynthesis. Its function is as follows. Converts D-glucuronic acid residues adjacent to N-sulfate sugar residues to L-iduronic acid residues, both in maturing heparan sulfate (HS) and heparin chains. This is important for further modifications that determine the specificity of interactions between these glycosaminoglycans and proteins. This Bos taurus (Bovine) protein is D-glucuronyl C5-epimerase (GLCE).